We begin with the raw amino-acid sequence, 147 residues long: Large-conductance mechanosensitive channel (147 aa).

2 helical membrane passes run 14 to 34 (VVDMAVGIVIGAAFGSIVKSL) and 85 to 105 (FGLFVNAIISFTIVAFALFMI).

This sequence belongs to the MscL family. In terms of assembly, homopentamer.

It is found in the cell inner membrane. In terms of biological role, channel that opens in response to stretch forces in the membrane lipid bilayer. May participate in the regulation of osmotic pressure changes within the cell. This Tolumonas auensis (strain DSM 9187 / NBRC 110442 / TA 4) protein is Large-conductance mechanosensitive channel.